We begin with the raw amino-acid sequence, 139 residues long: Small ribosomal subunit protein bS6 (139 aa).

The disordered stretch occupies residues 118-139; the sequence is SFKGGSKIETPTGSESTDIQEK. The segment covering 126 to 139 has biased composition (polar residues); sequence ETPTGSESTDIQEK.

The protein belongs to the bacterial ribosomal protein bS6 family.

Its function is as follows. Binds together with bS18 to 16S ribosomal RNA. The protein is Small ribosomal subunit protein bS6 of Borrelia garinii subsp. bavariensis (strain ATCC BAA-2496 / DSM 23469 / PBi) (Borreliella bavariensis).